The following is a 591-amino-acid chain: MNQGKIITVSGPLVVASGMQEANIQDICRVGHLGLVGEIIEMRRDQASIQVYEETSGIGPGEPVVTTGCPLSVELGPGLISEMFDGIQRPLDRFQKATDSDFLIRGVAIPSLDRKAKWAFIPKLSVGQEVVAGDILGTVQETAVIEHRIMVPYKVSGTLVAIHAGDFTVTDTVYEIKQEDGSIYQGSLMQTWPVRQSRPVAQKLIPVEPLVTGQRVIDTFFPVTKGGAAAVPGPFGAGKTVVQHQIAKFANVDIVIYVGCGERGNEMTDVLNEFPELIDPNTGQSIMERTVLIANTSNMPVAAREASIYTGITIAEYFRDMGYSVAIMADSTSRWAEALREMSGRLQEMPGDEGYPAYLGSRIAEYYERAGRVRTLGSQEREGTITAIGAVSPPGGDISEPVTQNTLRIVKVFWGLDAPLAQRRHFPAINWLTSYSLYQDDVGSYIDRKQESNWSNKVTRAMAILQREASLEEIVRLVGLDSLSEQDRLTMAVARQIREDYLQQNAFDSVDTFTSFPKQEAMLTNILTFNEEASKALSLGAYFNEIMEGTAQVRDRIARSKFIPEENLEQIKGLTQKVTKEIHHVLAKGGI.

G233 to T240 provides a ligand contact to ATP.

The protein belongs to the ATPase alpha/beta chains family.

It catalyses the reaction ATP + H2O + 4 H(+)(in) = ADP + phosphate + 5 H(+)(out). Its function is as follows. Produces ATP from ADP in the presence of a proton gradient across the membrane. The V-type alpha chain is a catalytic subunit. The chain is V-type ATP synthase alpha chain from Streptococcus pyogenes serotype M2 (strain MGAS10270).